The chain runs to 214 residues: MTIENEALTLKKRFRGYFPVVVDVETAGFNAQTDALLEICAVTLRMDEEGVLHPASTIHFHIEPFEGANLEKEALEFNGIRDPFSPLRGAVSEQEALKEIYKLIRKEQKASDCSRAIMVAHNAAFDLSFVNAANERCKLKRVPFHPFATFDTATLSGLAYGQTVLAKACKTAGMEFDNREAHSALYDTQKTAELFCGIVNKWKALGGWPLVNEE.

One can recognise an Exonuclease domain in the interval 20-195 (VVVDVETAGF…YDTQKTAELF (176 aa)). Mg(2+) is bound by residues Asp-23, Glu-25, His-182, and Asp-187. Residue His-182 is the Proton donor/acceptor of the active site.

The protein belongs to the RNase T family. Homodimer. It depends on Mg(2+) as a cofactor.

In terms of biological role, trims short 3' overhangs of a variety of RNA species, leaving a one or two nucleotide 3' overhang. Responsible for the end-turnover of tRNA: specifically removes the terminal AMP residue from uncharged tRNA (tRNA-C-C-A). Also appears to be involved in tRNA biosynthesis. The protein is Ribonuclease T of Vibrio parahaemolyticus serotype O3:K6 (strain RIMD 2210633).